Here is a 729-residue protein sequence, read N- to C-terminus: Sodium-dependent neutral amino acid transporter B(0)AT2 (729 aa).

Over 1–69 (MPKNSKVVKR…ERPAWNSKLQ (69 aa)) the chain is Cytoplasmic. Ser-25 and Ser-55 each carry phosphoserine. Transmembrane regions (helical) follow at residues 70-90 (YILA…FPYL), 98-117 (AYLL…LFFL), and 142-162 (GIGF…NVII). Over 163-225 (GWTLFYFSQS…SSISESGGLN (63 aa)) the chain is Extracellular. An N-linked (GlcNAc...) asparagine glycan is attached at Asn-187. The next 4 membrane-spanning stretches (helical) occupy residues 226–244 (WKMT…LAMI), 253–270 (IMYF…CFLI), 306–323 (VFFA…FSSY), and 335–356 (VLVS…FAVL). Residues 357–452 (GFKANIVNEK…FIAFTEAMTH (96 aa)) lie on the Extracellular side of the membrane. N-linked (GlcNAc...) asparagine glycans are attached at residues Asn-383 and Asn-394. Transmembrane regions (helical) follow at residues 453–472 (FPAS…NLGL), 496–514 (ILTV…MFVQ), 530–550 (TLPL…VYGI), 571–592 (YMWK…IVNM), and 620–642 (VVCF…IRRC). Topologically, residues 643-729 (NLIDDSSGNL…DMPDMPESDL (87 aa)) are cytoplasmic. Residues Ser-687, Ser-699, and Ser-701 each carry the phosphoserine modification.

It belongs to the sodium:neurotransmitter symporter (SNF) (TC 2.A.22) family. SLC6A15 subfamily. Widely distributed in the central nervous system, including the olfactory bulb, the hypothalamus, the cerebral cortex, the hippocampus, and the cerebellum. In addition, intense expression is found in the motor nuclei including the oculomotor nucleus, abducens nucleus, trigeminal motor nucleus, facial nucleus, hypoglossal nucleus and ventral horn of spinal cord. Intense hybridization signals are also observed in the nuclei containing monoaminergic neurons, such as locus coeruleus, the substantia nigra pars compacta, the ventral tegmental area, the dorsal raphe nucleus and the median raphe nucleus.

The protein resides in the membrane. The catalysed reaction is L-leucine(in) + Na(+)(in) = L-leucine(out) + Na(+)(out). The enzyme catalyses L-isoleucine(in) + Na(+)(in) = L-isoleucine(out) + Na(+)(out). It carries out the reaction L-methionine(in) + Na(+)(in) = L-methionine(out) + Na(+)(out). It catalyses the reaction L-proline(in) + Na(+)(in) = L-proline(out) + Na(+)(out). The catalysed reaction is L-alanine(in) + Na(+)(in) = L-alanine(out) + Na(+)(out). The enzyme catalyses L-asparagine(in) + Na(+)(in) = L-asparagine(out) + Na(+)(out). It carries out the reaction L-valine(in) + Na(+)(in) = L-valine(out) + Na(+)(out). It catalyses the reaction L-cysteine(in) + Na(+)(in) = L-cysteine(out) + Na(+)(out). The catalysed reaction is L-glutamine(in) + Na(+)(in) = L-glutamine(out) + Na(+)(out). The enzyme catalyses L-serine(in) + Na(+)(in) = L-serine(out) + Na(+)(out). It carries out the reaction L-threonine(in) + Na(+)(in) = L-threonine(out) + Na(+)(out). It catalyses the reaction L-pipecolate(in) + Na(+)(in) = L-pipecolate(out) + Na(+)(out). The catalysed reaction is L-phenylalanine(in) + Na(+)(in) = L-phenylalanine(out) + Na(+)(out). In terms of biological role, functions as a sodium-dependent neutral amino acid transporter. Exhibits preference for the branched-chain amino acids, particularly leucine, valine and isoleucine and methionine. Can also transport low-affinity substrates such as alanine, phenylalanine, glutamine and pipecolic acid. Mediates the saturable, pH-sensitive and electrogenic cotransport of proline and sodium ions with a stoichiometry of 1:1. May have a role as transporter for neurotransmitter precursors into neurons. In contrast to other members of the neurotransmitter transporter family, does not appear to be chloride-dependent. In Rattus norvegicus (Rat), this protein is Sodium-dependent neutral amino acid transporter B(0)AT2 (Slc6a15).